We begin with the raw amino-acid sequence, 780 residues long: Protein phosphatase 1 regulatory subunit 21 (780 aa).

Coiled-coil stretches lie at residues 1 to 209 (MASA…NLHE) and 556 to 605 (ESRE…DRLR). The interval 84 to 104 (EPRGKKNKKSGESSSQLSQEQ) is disordered. Residues 95-104 (ESSSQLSQEQ) are compositionally biased toward low complexity. Position 652 is a phosphothreonine (T652). Residues 694 to 742 (AECRALSKRLALAEKSKETLTEEMRLASQNISRLQDELMTTKRSYEDQL) adopt a coiled-coil conformation.

In terms of assembly, component of the FERRY complex, composed of five subunits: TBCK, PPP1R21, FERRY3, CRYZL1 and GATAD1, with a ratio of 1:2:1:2:4 respectively. PPP1R21 serves as a binding hub connecting all five complex subunits to mediate the binding to specific mitochondrial mRNAs. Interacts with the GTP-bound form of RAB5A (via its C-terminal region); linking the mRNP complex onto trafficking endosomes for active mRNA transport. Interacts with PPP1CA. Expressed at 16 dpc in the cortex (at protein level).

It localises to the early endosome. Its function is as follows. Component of the FERRY complex (Five-subunit Endosomal Rab5 and RNA/ribosome intermediary). The FERRY complex directly interacts with mRNAs and RAB5A, and functions as a RAB5A effector involved in the localization and the distribution of specific mRNAs most likely by mediating their endosomal transport. The complex recruits mRNAs and ribosomes to early endosomes through direct mRNA-interaction. In the complex, PPP1R21 serves as a binding hub connecting all five complex subunits and mediating the binding to mRNA and early endosomes via RAB5A. Putative regulator of protein phosphatase 1 (PP1) activity. May play a role in the endosomal sorting process or in endosome maturation pathway. The protein is Protein phosphatase 1 regulatory subunit 21 (Ppp1r21) of Mus musculus (Mouse).